Consider the following 94-residue polypeptide: Enhancer of yellow 2 transcription factor (94 aa).

This sequence belongs to the ENY2 family. Component of the nuclear pore complex (NPC)-associated AMEX complex (anchoring and mRNA export complex), composed of at least e(y)2 and xmas-2. Component of the SAGA transcription coactivator-HAT complexes, at least composed of Ada2b, e(y)2, Pcaf/Gcn5, Taf10 and Nipped-A/Trrap. Within the SAGA complex, e(y)2, Sgf11, and not/nonstop form an additional subcomplex of SAGA called the DUB module (deubiquitination module). Component of the THO complex, composed of at least e(y)2, HPR1, THO2, THOC5, THOC6 and THOC7. Interacts with e(y)1. Interacts with su(Hw) (via zinc fingers). Interacts with xmas-2; required for localization to the nuclear periphery. Interacts with the nuclear pore complex (NPC).

The protein resides in the nucleus. It is found in the nucleoplasm. It localises to the cytoplasm. Involved in mRNA export coupled transcription activation by association with both the AMEX and the SAGA complexes. The SAGA complex is a multiprotein complex that activates transcription by remodeling chromatin and mediating histone acetylation and deubiquitination. Within the SAGA complex, participates in a subcomplex that specifically deubiquitinates histone H2B. The SAGA complex is recruited to specific gene promoters by activators, where it is required for transcription. Required for nuclear receptor-mediated transactivation. Involved in transcription elongation by recruiting the THO complex onto nascent mRNA. The AMEX complex functions in docking export-competent ribonucleoprotein particles (mRNPs) to the nuclear entrance of the nuclear pore complex (nuclear basket). AMEX participates in mRNA export and accurate chromatin positioning in the nucleus by tethering genes to the nuclear periphery. The sequence is that of Enhancer of yellow 2 transcription factor from Drosophila grimshawi (Hawaiian fruit fly).